Reading from the N-terminus, the 119-residue chain is Platelet basic protein (119 aa).

Positions 1–33 (MSLRLGAISSCTTSSPFPVLQVLLPLSLLLTTL) are cleaved as a signal peptide. A propeptide spanning residues 34–39 (VPATMG) is cleaved from the precursor. Intrachain disulfides connect Cys54-Cys80 and Cys56-Cys96.

Its subcellular location is the secreted. Its function is as follows. Chemoattractant factor for neutrophils. The sequence is that of Platelet basic protein (PPBP) from Sus scrofa (Pig).